The chain runs to 184 residues: ATP synthase subunit b, chloroplastic (184 aa).

The chain crosses the membrane as a helical span at residues 27 to 49; sequence LATNLINLSVVLGVLIFFGKGVL.

The protein belongs to the ATPase B chain family. As to quaternary structure, F-type ATPases have 2 components, F(1) - the catalytic core - and F(0) - the membrane proton channel. F(1) has five subunits: alpha(3), beta(3), gamma(1), delta(1), epsilon(1). F(0) has four main subunits: a(1), b(1), b'(1) and c(10-14). The alpha and beta chains form an alternating ring which encloses part of the gamma chain. F(1) is attached to F(0) by a central stalk formed by the gamma and epsilon chains, while a peripheral stalk is formed by the delta, b and b' chains.

It is found in the plastid. It localises to the chloroplast thylakoid membrane. Its function is as follows. F(1)F(0) ATP synthase produces ATP from ADP in the presence of a proton or sodium gradient. F-type ATPases consist of two structural domains, F(1) containing the extramembraneous catalytic core and F(0) containing the membrane proton channel, linked together by a central stalk and a peripheral stalk. During catalysis, ATP synthesis in the catalytic domain of F(1) is coupled via a rotary mechanism of the central stalk subunits to proton translocation. Functionally, component of the F(0) channel, it forms part of the peripheral stalk, linking F(1) to F(0). This Spinacia oleracea (Spinach) protein is ATP synthase subunit b, chloroplastic.